The chain runs to 829 residues: Pre-mRNA-splicing factor syf1 (829 aa).

12 HAT repeats span residues 15-47 (SLVS…YKLQ), 49-81 (GTVQ…FRTK), 93-125 (SEYQ…FLMQ), 127-161 (PLVT…FANS), 163-182 (EGET…PEDA), 277-312 (GSFE…FEES), 380-418 (DNKE…FYEA), 420-456 (GDLS…MELR), 473-505 (APKR…YVDL), 544-578 (KYFE…KAVD), 581-615 (ISIE…LEEE), and 689-723 (GEID…FEVQ). Positions 799 to 829 (AASEGPKGGSMPVQPVEVHNPDAIDLDEMDE) are disordered.

This sequence belongs to the crooked-neck family. As to quaternary structure, associated with the spliceosome.

The protein localises to the nucleus. Involved in pre-mRNA splicing and cell cycle progression. The sequence is that of Pre-mRNA-splicing factor syf1 (msp-41) from Neurospora crassa (strain ATCC 24698 / 74-OR23-1A / CBS 708.71 / DSM 1257 / FGSC 987).